We begin with the raw amino-acid sequence, 423 residues long: Acaloleptin A (423 aa).

An N-terminal signal peptide occupies residues 1 to 17 (MITKISLILFAVLLVSG). Positions 18–26 (LEEEERWKR) are excised as a propeptide. Disordered stretches follow at residues 28-58 (LQPG…NTKT), 108-128 (INNK…DNGN), 180-203 (NVNN…GNTR), and 355-385 (SDDE…TRAD). Positions 34–43 (NVNNNDQPWQ) are enriched in polar residues. Over residues 180–189 (NVNNKDQPWQ) the composition is skewed to polar residues. Positions 357–366 (DEDEEEEEDQ) are enriched in acidic residues. Residues 376–385 (RGDDGNTRAD) are compositionally biased toward basic and acidic residues.

This sequence belongs to the coleoptericin family. As to expression, hemolymph (at protein level). Larval fat body.

It localises to the secreted. Functionally, acaloleptins A1-A4 show antibacterial activity against Gram-negative bacteria but not against Gram-positive bacteria. Acaloleptin A5 shows antibacterial activity against Gram-positive bacteria but not against Gram-negative bacteria, and may also have antifungal activity. This is Acaloleptin A from Acalolepta luxuriosa (Udo longhorn beetle).